Here is a 234-residue protein sequence, read N- to C-terminus: Leucyl/phenylalanyl-tRNA--protein transferase (234 aa).

The protein belongs to the L/F-transferase family.

It is found in the cytoplasm. The catalysed reaction is N-terminal L-lysyl-[protein] + L-leucyl-tRNA(Leu) = N-terminal L-leucyl-L-lysyl-[protein] + tRNA(Leu) + H(+). The enzyme catalyses N-terminal L-arginyl-[protein] + L-leucyl-tRNA(Leu) = N-terminal L-leucyl-L-arginyl-[protein] + tRNA(Leu) + H(+). It catalyses the reaction L-phenylalanyl-tRNA(Phe) + an N-terminal L-alpha-aminoacyl-[protein] = an N-terminal L-phenylalanyl-L-alpha-aminoacyl-[protein] + tRNA(Phe). Its function is as follows. Functions in the N-end rule pathway of protein degradation where it conjugates Leu, Phe and, less efficiently, Met from aminoacyl-tRNAs to the N-termini of proteins containing an N-terminal arginine or lysine. This Citrobacter koseri (strain ATCC BAA-895 / CDC 4225-83 / SGSC4696) protein is Leucyl/phenylalanyl-tRNA--protein transferase.